Here is a 102-residue protein sequence, read N- to C-terminus: Circadian clock oscillator protein KaiA (102 aa).

Positions 1–102 constitute a KaiA C-terminal domain; the sequence is MTQEVDQQIL…CEAYRGAIFK (102 aa).

Belongs to the KaiA family. As to quaternary structure, homodimer. The KaiABC complex composition changes during the circadian cycle to control KaiC phosphorylation. Complexes KaiC(6), KaiA(2-4):KaiC(6), KaiB(6):KaiC(6) and KaiC(6):KaiB(6):KaiA(12) are among the most important forms, many form cooperatively. KaiA and CikA bind to the same region of the KaiB(fs) form and therefore compete.

Key component of the KaiABC oscillator complex, which constitutes the main circadian regulator in cyanobacteria. Complex composition changes during the circadian cycle to control KaiC phosphorylation. KaiA stimulates KaiC autophosphorylation, while KaiB sequesters KaiA, leading to KaiC autodephosphorylation. KaiA binding to the KaiC CII domain during the subjective day yields KaiA(2-4):KaiC(6) complexes which stimulate KaiC autophosphorylation. Phospho-Ser-431 KaiC accumulation triggers binding of KaiB during the subjective night to form the KaiB(6):KaiC(6) complex, leading to changes in the output regulators CikA and SasA. KaiB(6):KaiC(6) formation exposes a site for KaiA binding on KaiB that sequesters KaiA from KaiC's CII domain, making the KaiC(6):KaiB(6):KaiA(12) complex resulting in KaiC autodephosphorylation. Complete dephosphorylation of KaiC leads to dissociation of KaiA(2):KaiB(1), completing 1 cycle of the Kai oscillator. The protein is Circadian clock oscillator protein KaiA of Nostoc sp. (strain PCC 7120 / SAG 25.82 / UTEX 2576).